A 238-amino-acid chain; its full sequence is Glycerol-3-phosphate acyltransferase (238 aa).

The next 6 helical transmembrane spans lie at valine 5 to phenylalanine 25, phenylalanine 61 to leucine 81, phenylalanine 88 to isoleucine 108, isoleucine 125 to phenylalanine 145, isoleucine 149 to tryptophan 169, and alanine 194 to isoleucine 214.

It belongs to the PlsY family. In terms of assembly, probably interacts with PlsX.

It localises to the cell membrane. The catalysed reaction is an acyl phosphate + sn-glycerol 3-phosphate = a 1-acyl-sn-glycero-3-phosphate + phosphate. The protein operates within lipid metabolism; phospholipid metabolism. In terms of biological role, catalyzes the transfer of an acyl group from acyl-phosphate (acyl-PO(4)) to glycerol-3-phosphate (G3P) to form lysophosphatidic acid (LPA). This enzyme utilizes acyl-phosphate as fatty acyl donor, but not acyl-CoA or acyl-ACP. The chain is Glycerol-3-phosphate acyltransferase from Mycoplasma mobile (strain ATCC 43663 / 163K / NCTC 11711) (Mesomycoplasma mobile).